The chain runs to 599 residues: Aspartate--tRNA(Asp/Asn) ligase (599 aa).

Residue glutamate 180 participates in L-aspartate binding. Positions 204-207 are aspartate; it reads QLLK. Arginine 226 is an L-aspartate binding site. ATP is bound by residues 226–228 and glutamine 235; that span reads RDE. An L-aspartate-binding site is contributed by histidine 457. Residue glutamate 491 coordinates ATP. Arginine 498 serves as a coordination point for L-aspartate. Position 543-546 (543-546) interacts with ATP; the sequence is GWDR. The tract at residues 565 to 599 is disordered; sequence KAGGGRDPLTGAPAPISDEQRAETGVDYDPDADEN. Positions 590-599 are enriched in acidic residues; it reads VDYDPDADEN.

The protein belongs to the class-II aminoacyl-tRNA synthetase family. Type 1 subfamily. As to quaternary structure, homodimer.

It localises to the cytoplasm. The catalysed reaction is tRNA(Asx) + L-aspartate + ATP = L-aspartyl-tRNA(Asx) + AMP + diphosphate. In terms of biological role, aspartyl-tRNA synthetase with relaxed tRNA specificity since it is able to aspartylate not only its cognate tRNA(Asp) but also tRNA(Asn). Reaction proceeds in two steps: L-aspartate is first activated by ATP to form Asp-AMP and then transferred to the acceptor end of tRNA(Asp/Asn). In Bifidobacterium longum (strain NCC 2705), this protein is Aspartate--tRNA(Asp/Asn) ligase.